The chain runs to 426 residues: Immunoglobulin mu Fc receptor (426 aa).

Residues 1 to 16 (MNLWLWLLYFLPVSGT) form the signal peptide. An Ig-like domain is found at 24 to 121 (RLEVELGGSV…GKTQKVTLNV (98 aa)). 2 disulfide bridges follow: Cys-37–Cys-103 and Cys-49–Cys-58. Thr-91 carries the phosphothreonine modification. Residues 178-212 (KTEAPPVHQPSTNTSVSRHPRVYGASSETPTKPSA) form a disordered region. A helical membrane pass occupies residues 267-287 (FHILIPTFLGFLLLVLLGLVV). 2 disordered regions span residues 306–346 (RRMR…REPD) and 401–426 (DSND…PSRQ). The span at 415–426 (PSKPPGPRPSRQ) shows a compositional bias: pro residues.

In terms of assembly, interacts (via Ig-like domain) with IGHM (via CH4/Cmu4 domain), both secreted and membrane-bound IgM; the interaction is glycan-independent and multivalent theoretically involving up to eight binding sites for the IgM pentamer. Post-translationally, phosphorylated on both Tyr and Ser residues. O-glycosylated. Sialylated. O-linked glycans regulate trafficking to the plasma membrane.

The protein localises to the cell membrane. The protein resides in the early endosome membrane. It localises to the golgi apparatus. Its subcellular location is the trans-Golgi network membrane. It is found in the lysosome membrane. In terms of biological role, high-affinity Fc receptor for immunoglobulin M (IgM), both secreted and membrane-bound IgM. Primarily regulates IgM transport and homeostasis. In lymphoid cells, enables exocytosis of membrane-bound IgM on the plasma membrane as well as endocytosis of IgM-antigen complexes toward lysosomes for degradation. In mucosal epithelium, mediates retrotranscytosis of antigen-IgM complexes across mucosal M cells toward antigen-presenting cells in mucosal lymphoid tissues. Triggers costimulatory signaling and mediates most of IgM effector functions involved in B cell development and primary immune response to infection. Likely limits tonic IgM BCR signaling to self-antigens for proper negative selection of autoreactive B cells in the bone marrow and for the maintenance of regulatory B cell pool in peripheral lymphoid organs. Mediates antibody responses to T cell-dependent and T cell-independent antigens and promotes induction of an efficient neutralizing IgG response. Engages in cross-talk with antigen-receptor signaling via the non-canonical NF-kappa-B, MAP kinases and calcium signaling pathways. This is Immunoglobulin mu Fc receptor from Rattus norvegicus (Rat).